A 4981-amino-acid chain; its full sequence is Protocadherin Fat 4 (4981 aa).

The N-terminal stretch at M1 to A38 is a signal peptide. Residues W39–A4504 lie on the Extracellular side of the membrane. Cadherin domains follow at residues A43–F135, P136–F250, G251–V353, P359–F475, S476–F582, Q584–F689, Y690–F793, S794–F893, L894–F996, D997–F1100, N1101–F1210, L1211–F1315, P1316–F1420, P1421–F1529, F1529–F1629, T1630–F1740, P1741–F1841, S1842–F1944, S1945–F2051, F2051–F2154, A2155–F2259, E2260–F2364, A2365–F2466, Q2467–V2567, R2568–F2669, K2670–F2773, F2773–F2872, S2873–F2983, L2984–F3089, S3090–F3194, L3195–F3298, V3299–F3404, T3405–L3510, and M3509–F3620. N84 and N237 each carry an N-linked (GlcNAc...) asparagine glycan. N393, N416, N435, N483, N551, N615, N676, N721, N825, N880, N946, N1085, N1101, N1104, N1225, N1296, N1389, and N1514 each carry an N-linked (GlcNAc...) asparagine glycan. N1828, N1899, N1967, and N2119 each carry an N-linked (GlcNAc...) asparagine glycan. N2387 and N2430 each carry an N-linked (GlcNAc...) asparagine glycan. 7 N-linked (GlcNAc...) asparagine glycosylation sites follow: N2921, N2937, N3036, N3140, N3217, N3392, and N3477. Residues N3706 and N3758 are each glycosylated (N-linked (GlcNAc...) asparagine). An EGF-like 1 domain is found at D3802–E3860. 12 disulfides stabilise this stretch: C3806–C3817, C3811–C3848, C3850–C3859, C3866–C3877, C3871–C3886, C3888–C3897, C3904–C3915, C3909–C3924, C3926–C3935, C3942–C3953, C3947–C3962, and C3964–C3973. An EGF-like 2; calcium-binding domain is found at D3862–E3898. The region spanning D3900–E3936 is the EGF-like 3; calcium-binding domain. An EGF-like 4 domain is found at S3938–E3974. Residues L3975–C4159 enclose the Laminin G-like 1 domain. Residue N4017 is glycosylated (N-linked (GlcNAc...) asparagine). Disulfide bonds link C4133-C4159, C4166-C4177, C4171-C4186, and C4188-C4197. The EGF-like 5 domain maps to L4162 to E4198. A Laminin G-like 2 domain is found at Y4217–C4398. Residues N4267 and N4312 are each glycosylated (N-linked (GlcNAc...) asparagine). 4 disulfide bridges follow: C4365/C4398, C4430/C4441, C4435/C4451, and C4453/C4462. The EGF-like 6 domain occupies P4426 to E4463. Residues V4505–L4525 traverse the membrane as a helical segment. Residues C4526–V4981 are Cytoplasmic-facing. 5 disordered regions span residues A4534–I4584, Q4680–Y4713, R4752–D4856, K4869–G4911, and A4957–V4981. Residues Q4680–S4699 are compositionally biased toward polar residues. The necessary and sufficient for interaction with MPDZ stretch occupies residues F4706–L4795. Positions D4809–R4821 are enriched in basic and acidic residues. S4876 is subject to Phosphoserine. Positions V4971 to V4981 are enriched in basic and acidic residues.

In terms of assembly, heterophilic interaction with DCHS1; this interaction affects their respective protein levels. Interacts (via cytoplasmic domain) with MPDZ. Forms a complex with PALS1 and MPDZ. Widely expressed. Expressed in fetal brain, infant brain, brain tumor and colorectal cancer.

It localises to the membrane. In terms of biological role, cadherins are calcium-dependent cell adhesion proteins. FAT4 plays a role in the maintenance of planar cell polarity as well as in inhibition of YAP1-mediated neuroprogenitor cell proliferation and differentiation. The chain is Protocadherin Fat 4 (FAT4) from Homo sapiens (Human).